A 239-amino-acid polypeptide reads, in one-letter code: DNA repair protein RecO (239 aa).

It belongs to the RecO family.

In terms of biological role, involved in DNA repair and RecF pathway recombination. The sequence is that of DNA repair protein RecO from Stenotrophomonas maltophilia (strain K279a).